We begin with the raw amino-acid sequence, 78 residues long: Acyl carrier protein (78 aa).

In terms of domain architecture, Carrier spans 2 to 77; it reads DDLFKKIQQL…DAYEFIKSQQ (76 aa). Serine 37 carries the post-translational modification O-(pantetheine 4'-phosphoryl)serine.

It belongs to the acyl carrier protein (ACP) family. 4'-phosphopantetheine is transferred from CoA to a specific serine of apo-ACP by AcpS. This modification is essential for activity because fatty acids are bound in thioester linkage to the sulfhydryl of the prosthetic group.

It localises to the cytoplasm. It participates in lipid metabolism; fatty acid biosynthesis. In terms of biological role, carrier of the growing fatty acid chain in fatty acid biosynthesis. The chain is Acyl carrier protein from Treponema denticola (strain ATCC 35405 / DSM 14222 / CIP 103919 / JCM 8153 / KCTC 15104).